Here is a 106-residue protein sequence, read N- to C-terminus: Urease subunit beta (106 aa).

The protein belongs to the urease beta subunit family. Heterotrimer of UreA (gamma), UreB (beta) and UreC (alpha) subunits. Three heterotrimers associate to form the active enzyme.

It is found in the cytoplasm. The enzyme catalyses urea + 2 H2O + H(+) = hydrogencarbonate + 2 NH4(+). The protein operates within nitrogen metabolism; urea degradation; CO(2) and NH(3) from urea (urease route): step 1/1. This Prochlorococcus marinus (strain MIT 9312) protein is Urease subunit beta.